Consider the following 66-residue polypeptide: Small ribosomal subunit protein eS27 (66 aa).

4 residues coordinate Zn(2+): cysteine 21, cysteine 24, cysteine 40, and cysteine 43. The C4-type zinc-finger motif lies at 21–43 (CPNCGNEQTVFSHATFPVRCLSC).

The protein belongs to the eukaryotic ribosomal protein eS27 family. In terms of assembly, part of the 30S ribosomal subunit. Requires Zn(2+) as cofactor.

In Sulfurisphaera tokodaii (strain DSM 16993 / JCM 10545 / NBRC 100140 / 7) (Sulfolobus tokodaii), this protein is Small ribosomal subunit protein eS27.